Here is a 296-residue protein sequence, read N- to C-terminus: MKDKLVKAIAKDGQVRIIGAITTELVNEGVKLHNCAPTAAAALGRMLTAGALMGTTLKSGKDTLTLQIHGGGIAKGVVVTSYADGHVKGYIGNPTADIDPNSKGKLDVSGIIGKNGNLLVIRDMGLKEPYIGQVPIYTGEIGEDLAYYYTVSEQTPSAVGLGVLVDKDLSIKSAGGFIIQMMPGADEMLADLISYRLEEIPSITEMISKGMTIEEILEYIFEDMDLKILESIAPEYRCDCSREKVERAFASIGQKDLKEIYDEGKEEELKCHFCNKAYAFSHDEVGDILESYYSEK.

Disulfide bonds link Cys238/Cys240 and Cys271/Cys274.

This sequence belongs to the HSP33 family. In terms of processing, under oxidizing conditions two disulfide bonds are formed involving the reactive cysteines. Under reducing conditions zinc is bound to the reactive cysteines and the protein is inactive.

It localises to the cytoplasm. In terms of biological role, redox regulated molecular chaperone. Protects both thermally unfolding and oxidatively damaged proteins from irreversible aggregation. Plays an important role in the bacterial defense system toward oxidative stress. The chain is 33 kDa chaperonin from Clostridium botulinum (strain Loch Maree / Type A3).